Here is a 554-residue protein sequence, read N- to C-terminus: Hydroxylamine reductase (554 aa).

The [2Fe-2S] cluster site is built by Cys-3, Cys-6, Cys-18, and Cys-25. Positions 252, 276, 320, 408, 436, 461, 495, and 497 each coordinate hybrid [4Fe-2O-2S] cluster. The residue at position 408 (Cys-408) is a Cysteine persulfide.

Belongs to the HCP family. [2Fe-2S] cluster serves as cofactor. Hybrid [4Fe-2O-2S] cluster is required as a cofactor.

It is found in the cytoplasm. The enzyme catalyses A + NH4(+) + H2O = hydroxylamine + AH2 + H(+). In terms of biological role, catalyzes the reduction of hydroxylamine to form NH(3) and H(2)O. The chain is Hydroxylamine reductase from Photobacterium profundum (strain SS9).